Here is a 497-residue protein sequence, read N- to C-terminus: Galactose/methyl galactoside import ATP-binding protein MglA (497 aa).

2 ABC transporter domains span residues 6-241 and 252-497; these read LEIK…VGRS and VPGE…AKYL. 38–45 lines the ATP pocket; sequence GENGAGKS.

This sequence belongs to the ABC transporter superfamily. Galactose/methyl galactoside importer (TC 3.A.1.2.3) family. As to quaternary structure, the complex is composed of one ATP-binding protein (MglA), two transmembrane proteins (MglC) and a solute-binding protein (MglB).

The protein resides in the cell inner membrane. The enzyme catalyses D-galactose(out) + ATP + H2O = D-galactose(in) + ADP + phosphate + H(+). It carries out the reaction methyl beta-D-galactoside(out) + ATP + H2O = methyl beta-D-galactoside(in) + ADP + phosphate + H(+). Its function is as follows. Part of the ABC transporter complex MglABC involved in galactose/methyl galactoside import. Responsible for energy coupling to the transport system. This chain is Galactose/methyl galactoside import ATP-binding protein MglA, found in Treponema denticola (strain ATCC 35405 / DSM 14222 / CIP 103919 / JCM 8153 / KCTC 15104).